A 216-amino-acid chain; its full sequence is 3-isopropylmalate dehydratase small subunit (216 aa).

Belongs to the LeuD family. LeuD type 1 subfamily. As to quaternary structure, heterodimer of LeuC and LeuD.

It carries out the reaction (2R,3S)-3-isopropylmalate = (2S)-2-isopropylmalate. The protein operates within amino-acid biosynthesis; L-leucine biosynthesis; L-leucine from 3-methyl-2-oxobutanoate: step 2/4. Its function is as follows. Catalyzes the isomerization between 2-isopropylmalate and 3-isopropylmalate, via the formation of 2-isopropylmaleate. This is 3-isopropylmalate dehydratase small subunit from Polaromonas naphthalenivorans (strain CJ2).